A 142-amino-acid chain; its full sequence is Hemoglobin subunit zeta (142 aa).

Ser-2 is subject to N-acetylserine. Positions 2-142 (SLTKTEGTII…VSSVLTEKYR (141 aa)) constitute a Globin domain. Thr-29 carries the phosphothreonine modification. Phosphoserine is present on Ser-53. His-59 contributes to the heme b binding site. Ser-73 and Ser-82 each carry phosphoserine. His-88 serves as a coordination point for heme b.

Belongs to the globin family. As to quaternary structure, heterotetramer of two zeta chains and beta-type chains.

Its function is as follows. The zeta chain is an alpha-type chain of mammalian embryonic hemoglobin. In Pan troglodytes (Chimpanzee), this protein is Hemoglobin subunit zeta (HBZ1).